The primary structure comprises 809 residues: LPS-assembly protein LptD (809 aa).

Residues 1 to 22 form the signal peptide; sequence MRRALRLLPLPLSIAICLPAMA.

Belongs to the LptD family. In terms of assembly, component of the lipopolysaccharide transport and assembly complex. Interacts with LptE and LptA.

Its subcellular location is the cell outer membrane. Together with LptE, is involved in the assembly of lipopolysaccharide (LPS) at the surface of the outer membrane. The sequence is that of LPS-assembly protein LptD from Xanthomonas campestris pv. campestris (strain 8004).